We begin with the raw amino-acid sequence, 409 residues long: Multifunctional CCA protein (409 aa).

Positions 8 and 11 each coordinate ATP. The CTP site is built by Gly8 and Arg11. Asp21 and Asp23 together coordinate Mg(2+). Residues Arg91, Arg137, and Arg140 each coordinate ATP. Residues Arg91, Arg137, and Arg140 each contribute to the CTP site. The region spanning 228–329 (SGLHTLSVLE…LELLQSFDVY (102 aa)) is the HD domain.

Belongs to the tRNA nucleotidyltransferase/poly(A) polymerase family. Bacterial CCA-adding enzyme type 1 subfamily. In terms of assembly, monomer. Can also form homodimers and oligomers. It depends on Mg(2+) as a cofactor. Ni(2+) serves as cofactor.

It carries out the reaction a tRNA precursor + 2 CTP + ATP = a tRNA with a 3' CCA end + 3 diphosphate. It catalyses the reaction a tRNA with a 3' CCA end + 2 CTP + ATP = a tRNA with a 3' CCACCA end + 3 diphosphate. In terms of biological role, catalyzes the addition and repair of the essential 3'-terminal CCA sequence in tRNAs without using a nucleic acid template. Adds these three nucleotides in the order of C, C, and A to the tRNA nucleotide-73, using CTP and ATP as substrates and producing inorganic pyrophosphate. tRNA 3'-terminal CCA addition is required both for tRNA processing and repair. Also involved in tRNA surveillance by mediating tandem CCA addition to generate a CCACCA at the 3' terminus of unstable tRNAs. While stable tRNAs receive only 3'-terminal CCA, unstable tRNAs are marked with CCACCA and rapidly degraded. The sequence is that of Multifunctional CCA protein from Pseudomonas fluorescens (strain Pf0-1).